Reading from the N-terminus, the 562-residue chain is 3-hydroxy-3-methylglutaryl-coenzyme A reductase 2 (562 aa).

2 helical membrane passes run 32–56 (ALPLPLYLTNTFFLSLFFATVYFLL) and 77–100 (ICALIGFVASFIYLLGFCGIDLIF). The tract at residues 101–146 (RSSSDDDVWVNDGMIPCNQSLDCREVLPIKPNSVDPPRESELDSVE) is linker. An N-linked (GlcNAc...) asparagine glycan is attached at N118. Residues 147–562 (DEEIVKLVID…DIGPSSQVNR (416 aa)) form a catalytic region. E240 acts as the Charge relay system in catalysis. N304 carries an N-linked (GlcNAc...) asparagine glycan. Catalysis depends on charge relay system residues K372 and D448. Catalysis depends on H544, which acts as the Proton donor. N-linked (GlcNAc...) asparagine glycosylation occurs at N548. Position 550 is a phosphoserine (S550).

Belongs to the HMG-CoA reductase family. Restricted to young seedlings, roots, and inflorescences. Expressed in root tips, shoot apex, secretory zone of the stigma, microspores, mature pollen grains, gynoecium vascular tissue and fertilized ovules.

The protein localises to the endoplasmic reticulum membrane. It catalyses the reaction (R)-mevalonate + 2 NADP(+) + CoA = (3S)-3-hydroxy-3-methylglutaryl-CoA + 2 NADPH + 2 H(+). It participates in metabolic intermediate biosynthesis; (R)-mevalonate biosynthesis; (R)-mevalonate from acetyl-CoA: step 3/3. Regulated at the post-translational level in response to alterations of the sphingolipid and the sterol biosynthetic pathways. Its function is as follows. Catalyzes the synthesis of mevalonate. The specific precursor of all isoprenoid compounds present in plants. This chain is 3-hydroxy-3-methylglutaryl-coenzyme A reductase 2 (HMG2), found in Arabidopsis thaliana (Mouse-ear cress).